The following is a 196-amino-acid chain: dTTP/UTP pyrophosphatase (196 aa).

Residue Asp72 is the Proton acceptor of the active site.

This sequence belongs to the Maf family. YhdE subfamily. It depends on a divalent metal cation as a cofactor.

The protein resides in the cytoplasm. The catalysed reaction is dTTP + H2O = dTMP + diphosphate + H(+). It carries out the reaction UTP + H2O = UMP + diphosphate + H(+). Functionally, nucleoside triphosphate pyrophosphatase that hydrolyzes dTTP and UTP. May have a dual role in cell division arrest and in preventing the incorporation of modified nucleotides into cellular nucleic acids. This chain is dTTP/UTP pyrophosphatase, found in Chlamydia caviae (strain ATCC VR-813 / DSM 19441 / 03DC25 / GPIC) (Chlamydophila caviae).